Consider the following 184-residue polypeptide: Coordinator of PRMT5 and differentiation stimulator (184 aa).

Methionine 1 carries the N-acetylmethionine modification. A compositionally biased stretch (low complexity) spans 1–14 (MDLQAAGAQAQGAA). The segment at 1 to 136 (MDLQAAGAQA…PYDADDIQES (136 aa)) is disordered. Residues 42–56 (SSQERETEKAMDRLA) show a composition bias toward basic and acidic residues. A phosphoserine mark is found at serine 66 and serine 75. The span at 78–89 (EGFAMDEEDSDG) shows a compositional bias: acidic residues.

In terms of assembly, interacts with PRMT5. Interacts with histone H4; specifically interacts with the N-terminus of histone H4 but not with histone H3. Interacts with CBFB. Found in a complex with PRMT5, RUNX1 and CBFB.

It is found in the nucleus. In terms of biological role, histone-binding protein required for histone H4 methyltransferase activity of PRMT5. Specifically required for histone H4 'Arg-3' methylation mediated by PRMT5, but not histone H3 'Arg-8' methylation, suggesting that it modulates the substrate specificity of PRMT5. Specifically interacts with the N-terminus of histone H4 but not with histone H3, suggesting that it acts by promoting the association between histone H4 and PRMT5. Involved in CCNE1 promoter repression. Plays a role in muscle cell differentiation by modulating the recruitment of PRMT5 to the promoter of genes involved in the coordination between cell cycle exit and muscle differentiation. The sequence is that of Coordinator of PRMT5 and differentiation stimulator (COPRS) from Homo sapiens (Human).